The primary structure comprises 306 residues: D-alanine--D-alanine ligase (306 aa).

Residues 104–303 (KMLWKAFGLP…FEQLVVKILE (200 aa)) form the ATP-grasp domain. 134-189 (VAKLGLPLMVKPSLEGSSVGLTKVKAVEELKSAVEYALKFDNTILIEEWLAGDELT) provides a ligand contact to ATP. Residues Asp-257, Glu-270, and Asn-272 each contribute to the Mg(2+) site.

Belongs to the D-alanine--D-alanine ligase family. Requires Mg(2+) as cofactor. Mn(2+) is required as a cofactor.

Its subcellular location is the cytoplasm. The enzyme catalyses 2 D-alanine + ATP = D-alanyl-D-alanine + ADP + phosphate + H(+). Its pathway is cell wall biogenesis; peptidoglycan biosynthesis. Its function is as follows. Cell wall formation. In Haemophilus influenzae (strain PittGG), this protein is D-alanine--D-alanine ligase.